The sequence spans 318 residues: NADH-ubiquinone oxidoreductase chain 1 (318 aa).

The next 8 helical transmembrane spans lie at 2–22 (FMIN…FLTL), 70–90 (MFIL…IPLP), 100–120 (LGVL…LWSG), 147–167 (AIIL…TLII), 172–192 (MWLI…TLAE), 222–242 (LFFM…AILF), 253–273 (ELYT…FLWI), and 294–314 (LPLT…TSGI).

It belongs to the complex I subunit 1 family. In terms of assembly, core subunit of respiratory chain NADH dehydrogenase (Complex I) which is composed of 45 different subunits.

The protein localises to the mitochondrion inner membrane. It carries out the reaction a ubiquinone + NADH + 5 H(+)(in) = a ubiquinol + NAD(+) + 4 H(+)(out). Functionally, core subunit of the mitochondrial membrane respiratory chain NADH dehydrogenase (Complex I) which catalyzes electron transfer from NADH through the respiratory chain, using ubiquinone as an electron acceptor. Essential for the catalytic activity and assembly of complex I. This chain is NADH-ubiquinone oxidoreductase chain 1 (MT-ND1), found in Bos indicus (Zebu).